A 703-amino-acid chain; its full sequence is Ion-translocating oxidoreductase complex subunit C (703 aa).

4Fe-4S ferredoxin-type domains follow at residues 369 to 398 and 408 to 437; these read YDPQ…QQMY and KSNQ…IQYF. Residues C378, C381, C384, C388, C417, C420, C423, and C427 each contribute to the [4Fe-4S] cluster site. Disordered stretches follow at residues 467 to 542 and 555 to 680; these read RLER…PDNS and RQQT…PKKA. Basic and acidic residues predominate over residues 485-497; the sequence is ARREELAANKGED. Positions 559-577 are enriched in low complexity; that stretch reads NGNSPVSSASNSDSATISA. Over residues 578-592 the composition is skewed to polar residues; it reads DNTHSTPKTAQNQTA. Low complexity-rich tracts occupy residues 598–629 and 641–669; these read AAVA…TEKT and AAVA…EKTA.

It belongs to the 4Fe4S bacterial-type ferredoxin family. RnfC subfamily. The complex is composed of six subunits: RnfA, RnfB, RnfC, RnfD, RnfE and RnfG. [4Fe-4S] cluster serves as cofactor.

It is found in the cell inner membrane. In terms of biological role, part of a membrane-bound complex that couples electron transfer with translocation of ions across the membrane. This chain is Ion-translocating oxidoreductase complex subunit C, found in Actinobacillus succinogenes (strain ATCC 55618 / DSM 22257 / CCUG 43843 / 130Z).